A 525-amino-acid chain; its full sequence is Hydroxyneurosporene desaturase (525 aa).

The protein belongs to the carotenoid/retinoid oxidoreductase family.

The enzyme catalyses rhodopin + A = (3E)-3,4-didehydrorhodopin + AH2. The protein operates within carotenoid biosynthesis; spheroidene biosynthesis. Functionally, catalyzes the introduction of C-3,4 double bonds into 1-hydroxyneurosporene (1-HO-Neu) to yield demethylspheroidene (DMS). The preferred substrates are 1-hydroxy-neurosporene, 1-hydroxy-lycopene and 1,1-dihydroxyneurosporene, however the 3,4-didehydrolycopene derivatives such as 1,1-dihydroxy-3,4-didehydrolycopene, 1-methoxy-1-hydroxy-3,4-didehydrolycopene and 1-hydroxy-3,4-didehydrolycopene are also efficiently converted. 1-HO-carotene derivatives can be also used. The polypeptide is Hydroxyneurosporene desaturase (crtD) (Rubrivivax gelatinosus (Rhodocyclus gelatinosus)).